The following is a 222-amino-acid chain: GTP-binding nuclear protein Ran-4 (222 aa).

The 165-residue stretch at 10 to 174 (DLPTFKLLIV…LYLARRIAGD (165 aa)) folds into the Small GTPase Ran-type domain. 21–28 (DGGTGKTT) is a GTP binding site. Residues 40-48 (HNTEPTLGV) form a switch-I region. GTP-binding positions include G71, 125 to 128 (NKVD), and 153 to 155 (SAK). The interval 71 to 87 (GQEKYSGLKDAYYIHGQ) is switch-II.

Belongs to the small GTPase superfamily. Ran family. As to quaternary structure, found in a nuclear export complex with RanGTP, exportin and pre-miRNA.

The protein localises to the nucleus. Functionally, GTP-binding protein involved in nucleocytoplasmic transport. Required for the import of protein into the nucleus and also for RNA export. Involved in chromatin condensation and control of cell cycle. The chain is GTP-binding nuclear protein Ran-4 (RAN4) from Arabidopsis thaliana (Mouse-ear cress).